We begin with the raw amino-acid sequence, 550 residues long: Arginine--tRNA ligase (550 aa).

Residues A130–G140 carry the 'HIGH' region motif.

The protein belongs to the class-I aminoacyl-tRNA synthetase family. Monomer.

It is found in the cytoplasm. The catalysed reaction is tRNA(Arg) + L-arginine + ATP = L-arginyl-tRNA(Arg) + AMP + diphosphate. The protein is Arginine--tRNA ligase (argS) of Mycobacterium tuberculosis (strain CDC 1551 / Oshkosh).